Consider the following 262-residue polypeptide: Taurine import ATP-binding protein TauB (262 aa).

One can recognise an ABC transporter domain in the interval 4-234 (VDHASVFFAA…RFAETGDARS (231 aa)). 39–46 (GASGCGKS) contributes to the ATP binding site.

Belongs to the ABC transporter superfamily. Taurine importer (TC 3.A.1.17.1) family. As to quaternary structure, the complex is composed of two ATP-binding proteins (TauB), two transmembrane proteins (TauC) and a solute-binding protein (TauA).

Its subcellular location is the cell inner membrane. The catalysed reaction is taurine(out) + ATP + H2O = taurine(in) + ADP + phosphate + H(+). Functionally, part of the ABC transporter complex TauABC involved in taurine import. Responsible for energy coupling to the transport system. This chain is Taurine import ATP-binding protein TauB, found in Rhizobium johnstonii (strain DSM 114642 / LMG 32736 / 3841) (Rhizobium leguminosarum bv. viciae).